We begin with the raw amino-acid sequence, 387 residues long: uncharacterized protein (387 aa).

The first 27 residues, 1 to 27, serve as a signal peptide directing secretion; that stretch reads MKKWMITIAMLILAGIALFVFISPLKS.

This is an uncharacterized protein from Bacillus subtilis (strain 168).